A 123-amino-acid chain; its full sequence is Ribonuclease P protein component (123 aa).

This sequence belongs to the RnpA family. As to quaternary structure, consists of a catalytic RNA component (M1 or rnpB) and a protein subunit.

It catalyses the reaction Endonucleolytic cleavage of RNA, removing 5'-extranucleotides from tRNA precursor.. Functionally, RNaseP catalyzes the removal of the 5'-leader sequence from pre-tRNA to produce the mature 5'-terminus. It can also cleave other RNA substrates such as 4.5S RNA. The protein component plays an auxiliary but essential role in vivo by binding to the 5'-leader sequence and broadening the substrate specificity of the ribozyme. The chain is Ribonuclease P protein component from Streptomyces bikiniensis.